We begin with the raw amino-acid sequence, 1935 residues long: Myosin-7 (1935 aa).

One can recognise a Myosin N-terminal SH3-like domain in the interval 32-81 (DLKKDVFVPDDKEEFVKAKIISREGGKITAETEHGKTVTVKEDQVLQQNP). A Myosin motor domain is found at 85 to 778 (DKIEDMAMLT…LLGLLEEMRD (694 aa)). An N6,N6,N6-trimethyllysine modification is found at Lys129. Residue 178–185 (GESGAGKT) coordinates ATP. Phosphothreonine is present on Thr378. Actin-binding stretches follow at residues 655-677 (LNKLMTNLRSTHPHFVRCIIPNE) and 757-771 (RFGHTKVFFKAGLLG). The IQ domain maps to 781–810 (LSRIITRIQAQSRGVLARMEFKKLLERRDS). Residues 839–1935 (LLKSAETEKE…DIGTKGLNEE (1097 aa)) adopt a coiled-coil conformation. A phosphoserine mark is found at Ser1137 and Ser1269. Phosphothreonine is present on Thr1282. Tyr1308 carries the post-translational modification Phosphotyrosine. Residue Thr1309 is modified to Phosphothreonine. Residue Ser1510 is modified to Phosphoserine. Thr1513 carries the phosphothreonine modification. The disordered stretch occupies residues 1907-1935 (EERADIAESQVNKLRAKSRDIGTKGLNEE). Positions 1923 to 1935 (KSRDIGTKGLNEE) are enriched in basic and acidic residues.

This sequence belongs to the TRAFAC class myosin-kinesin ATPase superfamily. Myosin family. In terms of assembly, muscle myosin is a hexameric protein that consists of 2 heavy chain subunits (MHC), 2 alkali light chain subunits (MLC) and 2 regulatory light chain subunits (MLC-2). Interacts with ECPAS. Interacts (via C-terminus) with LRRC39.

The protein localises to the cytoplasm. The protein resides in the myofibril. It is found in the sarcomere. Myosins are actin-based motor molecules with ATPase activity essential for muscle contraction. Forms regular bipolar thick filaments that, together with actin thin filaments, constitute the fundamental contractile unit of skeletal and cardiac muscle. This chain is Myosin-7 (MYH7), found in Equus caballus (Horse).